A 177-amino-acid polypeptide reads, in one-letter code: dCTP deaminase, dUMP-forming (177 aa).

Residues 98–103 (RSSVGR), Asn-110, 115–118 (DPGF), 123–125 (TLE), Gln-144, 157–160 (YQGK), and Gln-164 each bind dCTP. Glu-125 serves as the catalytic Proton donor/acceptor.

Belongs to the dCTP deaminase family. Homotrimer. The cofactor is Mg(2+).

It carries out the reaction dCTP + 2 H2O = dUMP + NH4(+) + diphosphate. It functions in the pathway pyrimidine metabolism; dUMP biosynthesis; dUMP from dCTP: step 1/1. With respect to regulation, inhibited by dTTP. Bifunctional enzyme that catalyzes both the deamination of dCTP to dUTP and the hydrolysis of dUTP to dUMP without releasing the toxic dUTP intermediate. The polypeptide is dCTP deaminase, dUMP-forming (Halalkalibacterium halodurans (strain ATCC BAA-125 / DSM 18197 / FERM 7344 / JCM 9153 / C-125) (Bacillus halodurans)).